A 320-amino-acid polypeptide reads, in one-letter code: Probable trehalose-phosphate phosphatase C (320 aa).

Belongs to the trehalose phosphatase family. The cofactor is a divalent metal cation.

The catalysed reaction is alpha,alpha-trehalose 6-phosphate + H2O = alpha,alpha-trehalose + phosphate. Its pathway is glycan biosynthesis; trehalose biosynthesis. Removes the phosphate from trehalose 6-phosphate to produce free trehalose. Trehalose accumulation in plant may improve abiotic stress tolerance. The protein is Probable trehalose-phosphate phosphatase C (TPPC) of Arabidopsis thaliana (Mouse-ear cress).